The following is a 206-amino-acid chain: Small ribosomal subunit protein uS4 (206 aa).

Positions 96–156 constitute an S4 RNA-binding domain; sequence CRLDNVVYRM…EKSLGQLRIV (61 aa).

It belongs to the universal ribosomal protein uS4 family. Part of the 30S ribosomal subunit. Contacts protein S5. The interaction surface between S4 and S5 is involved in control of translational fidelity.

Functionally, one of the primary rRNA binding proteins, it binds directly to 16S rRNA where it nucleates assembly of the body of the 30S subunit. Its function is as follows. With S5 and S12 plays an important role in translational accuracy. This Pseudomonas putida (strain ATCC 47054 / DSM 6125 / CFBP 8728 / NCIMB 11950 / KT2440) protein is Small ribosomal subunit protein uS4.